Reading from the N-terminus, the 904-residue chain is Protein translocase subunit SecA (904 aa).

ATP contacts are provided by residues glutamine 89, 107 to 111 (GEGKT), and aspartate 502. Residues cysteine 886, cysteine 888, cysteine 897, and histidine 898 each contribute to the Zn(2+) site.

It belongs to the SecA family. In terms of assembly, monomer and homodimer. Part of the essential Sec protein translocation apparatus which comprises SecA, SecYEG and auxiliary proteins SecDF-YajC and YidC. Zn(2+) is required as a cofactor.

It localises to the cell inner membrane. Its subcellular location is the cytoplasm. The enzyme catalyses ATP + H2O + cellular proteinSide 1 = ADP + phosphate + cellular proteinSide 2.. In terms of biological role, part of the Sec protein translocase complex. Interacts with the SecYEG preprotein conducting channel. Has a central role in coupling the hydrolysis of ATP to the transfer of proteins into and across the cell membrane, serving both as a receptor for the preprotein-SecB complex and as an ATP-driven molecular motor driving the stepwise translocation of polypeptide chains across the membrane. The protein is Protein translocase subunit SecA of Rhizobium etli (strain CIAT 652).